The following is a 31-amino-acid chain: Photosystem II reaction center protein T (31 aa).

Residues 3–23 (AFSYTLLMALAAVTLFFAVAF) form a helical membrane-spanning segment.

The protein belongs to the PsbT family. As to quaternary structure, PSII is composed of 1 copy each of membrane proteins PsbA, PsbB, PsbC, PsbD, PsbE, PsbF, PsbH, PsbI, PsbJ, PsbK, PsbL, PsbM, PsbT, PsbX, PsbY, Psb30/Ycf12, peripheral proteins PsbO, CyanoQ (PsbQ), PsbU, PsbV and a large number of cofactors. It forms dimeric complexes.

The protein localises to the cellular thylakoid membrane. Its function is as follows. Found at the monomer-monomer interface of the photosystem II (PS II) dimer, plays a role in assembly and dimerization of PSII. PSII is a light-driven water plastoquinone oxidoreductase, using light energy to abstract electrons from H(2)O, generating a proton gradient subsequently used for ATP formation. The sequence is that of Photosystem II reaction center protein T from Prochlorococcus marinus (strain MIT 9211).